Consider the following 538-residue polypeptide: Cytochrome P450 monooxygenase cfoH (538 aa).

The chain crosses the membrane as a helical span at residues Val24–Phe44. Cys471 contacts heme.

Belongs to the cytochrome P450 family. It depends on heme as a cofactor.

Its subcellular location is the membrane. It functions in the pathway secondary metabolite biosynthesis; flavonoid biosynthesis. Its function is as follows. Cytochrome P450 monooxygenase; part of the gene cluster that mediates the biosynthesis of chlorflavonin, a fungal flavonoid with acetolactate synthase inhibitory activity. Within the pathway, cfoH is responsible for the hydroxylation of the flavonoid skeleton at position C2'. The pathway begins with the PKS-NRPS hybrid synthetase cfoA that uses benzoic acid or p-hydroxybenzoic acid as a starter unit with four rounds of chain elongation using malonyl-CoA to form the chalcone skeleton. Then, a new type of chalcone isomerase, cfoK, catalyzes the conversion of the chalcone into a flavanone by a histidine-mediated oxa-Michael addition mechanism. The desaturation of flavanone to flavone is catalyzed by a new type of flavone synthase, the flavin mononucleotide (FMN)-dependent oxidoreductase cfoJ. Monooxygenases cfoF, cfoG, and P450 cfoH are responsible for the hydroxylation of the flavonoid skeleton at sites C3, C8, and C2', respectively. Like cfoF, the dehydratase cfoI plays also a role in the hydroxylation of position C3. Methyltransferases cfoB, cfoC, and cfoD then catalyze the methylation of C7-OH, C8-OH, and C3-OH, respectively. Finally, the monooxygenase cfoE is responsible for the chlorination of flavonoid at position C3'. In Aspergillus candidus, this protein is Cytochrome P450 monooxygenase cfoH.